The chain runs to 425 residues: Tyrosine--tRNA ligase (425 aa).

Tyr-33 lines the L-tyrosine pocket. The short motif at 38 to 47 is the 'HIGH' region element; that stretch reads PTADSLHLGN. L-tyrosine is bound by residues Tyr-170 and Gln-174. Residues 230 to 234 carry the 'KMSKS' region motif; the sequence is KFGKS. Residue Lys-233 participates in ATP binding. The 67-residue stretch at 356–422 folds into the S4 RNA-binding domain; the sequence is KKLIDLLVET…GKKNKMIIRL (67 aa).

It belongs to the class-I aminoacyl-tRNA synthetase family. TyrS type 1 subfamily. Homodimer.

Its subcellular location is the cytoplasm. The enzyme catalyses tRNA(Tyr) + L-tyrosine + ATP = L-tyrosyl-tRNA(Tyr) + AMP + diphosphate + H(+). Its function is as follows. Catalyzes the attachment of tyrosine to tRNA(Tyr) in a two-step reaction: tyrosine is first activated by ATP to form Tyr-AMP and then transferred to the acceptor end of tRNA(Tyr). The polypeptide is Tyrosine--tRNA ligase (Protochlamydia amoebophila (strain UWE25)).